The chain runs to 489 residues: Tripartite motif-containing protein 10 (489 aa).

The RING-type zinc-finger motif lies at cysteine 16 to lysine 61. The B box-type zinc-finger motif lies at aspartate 94 to leucine 135. Cysteine 99, histidine 102, cysteine 121, and histidine 127 together coordinate Zn(2+). A coiled-coil region spans residues tyrosine 142–arginine 245. A B30.2/SPRY domain is found at arginine 292–alanine 486.

This sequence belongs to the TRIM/RBCC family. As to quaternary structure, interacts with IFNAR1; this interaction prevents association of IFNAR1 with TYK2.

Its subcellular location is the cytoplasm. E3 ligase that plays an essential role in the differentiation and survival of terminal erythroid cells. May directly bind to PTEN and promote its ubiquitination, resulting in its proteasomal degradation and activation of hypertrophic signaling. In addition, plays a role in immune response regulation by repressing the phosphorylation of STAT1 and STAT2 in the interferon/JAK/STAT signaling pathway independent of its E3 ligase activity. Mechanistically, interacts with the intracellular domain of IFNAR1 and thereby inhibits the association between TYK2 and IFNAR1. This chain is Tripartite motif-containing protein 10 (TRIM10), found in Bos taurus (Bovine).